We begin with the raw amino-acid sequence, 174 residues long: MTQPIFLVGPRGCGKTTVGLELARACQSQFVDTDHWLQTKAGRTIAEIVEKEGWETFRALETETLKAVSAPSTVIATGGGIILAEHNRGFMREHGIVIYLCAPVATLVERLEAFPEEGQRPTLTGKPISDEVSEVLAERDALYREAAHHVVDASQTPEQVVSHIVTALRLACAS.

12 to 17 (GCGKTT) contacts ATP. Mg(2+) is bound by residues T16 and D32. Substrate-binding residues include D34, R58, and G79. Positions 112-126 (EAFPEEGQRPTLTGK) are LID domain. ATP is bound at residue R120. R139 lines the substrate pocket. Q155 contributes to the ATP binding site.

This sequence belongs to the shikimate kinase family. AroL subfamily. Monomer. Mg(2+) is required as a cofactor.

The protein localises to the cytoplasm. The enzyme catalyses shikimate + ATP = 3-phosphoshikimate + ADP + H(+). Its pathway is metabolic intermediate biosynthesis; chorismate biosynthesis; chorismate from D-erythrose 4-phosphate and phosphoenolpyruvate: step 5/7. In terms of biological role, catalyzes the specific phosphorylation of the 3-hydroxyl group of shikimic acid using ATP as a cosubstrate. The chain is Shikimate kinase 2 from Enterobacter sp. (strain 638).